The following is a 394-amino-acid chain: Phosphoglycerate kinase (394 aa).

Residues 21–23, Arg-36, 59–62, Arg-113, and Arg-146 contribute to the substrate site; these read DLN and HLGR. Residues Lys-197, Glu-319, and 345 to 348 each bind ATP; that span reads GGDT.

Belongs to the phosphoglycerate kinase family. In terms of assembly, monomer.

Its subcellular location is the cytoplasm. The enzyme catalyses (2R)-3-phosphoglycerate + ATP = (2R)-3-phospho-glyceroyl phosphate + ADP. It participates in carbohydrate degradation; glycolysis; pyruvate from D-glyceraldehyde 3-phosphate: step 2/5. The polypeptide is Phosphoglycerate kinase (Halorhodospira halophila (strain DSM 244 / SL1) (Ectothiorhodospira halophila (strain DSM 244 / SL1))).